Consider the following 394-residue polypeptide: Penicillopepsin-2 (394 aa).

A signal peptide spans 1–20 (MVVFSKITVVLAGLATVASA). A propeptide spans 21-71 (VPTGTSRKSTFTVNQKARPVAQAKAINLPGMYASALSKYGAAVPASVKAAA) (activation peptide). Positions 87–391 (YLTPVNVGGT…DANGPRLGFA (305 aa)) constitute a Peptidase A1 domain. The active site involves Asp103. N-linked (GlcNAc...) asparagine glycosylation is present at Asn132. Residue Asp283 is part of the active site. A disulfide bridge connects residues Cys319 and Cys354.

Belongs to the peptidase A1 family. Monomer.

It localises to the secreted. The enzyme catalyses Hydrolysis of proteins with broad specificity similar to that of pepsin A, preferring hydrophobic residues at P1 and P1', but also cleaving 20-Gly-|-Glu-21 in the B chain of insulin. Clots milk, and activates trypsinogen.. Functionally, secreted aspartic endopeptidase that allows assimilation of proteinaceous substrates. The scissile peptide bond is attacked by a nucleophilic water molecule activated by two aspartic residues in the active site. Shows a broad primary substrate specificity. Favors hydrophobic residues at the P1 and P1' positions, but can also activate trypsinogen and hydrolyze the B chain of insulin between positions 'Gly-20' and 'Glu-21'. The chain is Penicillopepsin-2 from Penicillium janthinellum (Penicillium vitale).